Reading from the N-terminus, the 125-residue chain is Egg cell-secreted protein 1.2 (125 aa).

The first 22 residues, 1–22 (MASNTSFLFATIAILLVLNISG), serve as a signal peptide directing secretion.

The protein belongs to the plant egg cell-secreted peptide family. In terms of tissue distribution, restricted to female reproductive tissues, specifically accumulating in storage vesicles of the unfertilized egg cell.

Its subcellular location is the cytoplasmic vesicle. It localises to the secreted. Involved in the regulation of gamete interactions during the double fertilization and to prevent multiple-pollen tube attraction; mediates the redistribution of the gamete fusogen HAP2/GCS1 to the cell surface after secretion upon sperm arrival. This is Egg cell-secreted protein 1.2 (EC1.2) from Arabidopsis thaliana (Mouse-ear cress).